Reading from the N-terminus, the 332-residue chain is Nuclear hormone receptor family member nhr-9 (332 aa).

A DNA-binding region (nuclear receptor) is located at residues 11–85 (ERRCAICSKL…MGMRIVTNQY (75 aa)). NR C4-type zinc fingers lie at residues 14 to 34 (CAIC…CNAC) and 50 to 73 (CINN…YNKC). An NR LBD domain is found at 101 to 332 (DRSNKLMNFQ…KRLCAELLGA (232 aa)).

This sequence belongs to the nuclear hormone receptor family.

The protein resides in the nucleus. In terms of biological role, orphan nuclear receptor. The polypeptide is Nuclear hormone receptor family member nhr-9 (nhr-9) (Caenorhabditis elegans).